The following is a 503-amino-acid chain: Probable cytosol aminopeptidase (503 aa).

Mn(2+) is bound by residues lysine 270 and aspartate 275. Lysine 282 is an active-site residue. 3 residues coordinate Mn(2+): aspartate 293, aspartate 352, and glutamate 354. The active site involves arginine 356.

Belongs to the peptidase M17 family. The cofactor is Mn(2+).

It is found in the cytoplasm. It catalyses the reaction Release of an N-terminal amino acid, Xaa-|-Yaa-, in which Xaa is preferably Leu, but may be other amino acids including Pro although not Arg or Lys, and Yaa may be Pro. Amino acid amides and methyl esters are also readily hydrolyzed, but rates on arylamides are exceedingly low.. The catalysed reaction is Release of an N-terminal amino acid, preferentially leucine, but not glutamic or aspartic acids.. Presumably involved in the processing and regular turnover of intracellular proteins. Catalyzes the removal of unsubstituted N-terminal amino acids from various peptides. The polypeptide is Probable cytosol aminopeptidase (Pectobacterium atrosepticum (strain SCRI 1043 / ATCC BAA-672) (Erwinia carotovora subsp. atroseptica)).